The primary structure comprises 56 residues: HLRNHFGSKPFKCDKCSYSCVNKSMLNSHLKSHSNVYQFRCSDCAYATKYCHSLKL.

3 consecutive C2H2-type zinc fingers follow at residues 1-5 (HLRNH), 11-33 (FKCD…LKSH), and 39-56 (FRCS…SLKL).

Belongs to the hunchback C2H2-type zinc-finger protein family.

The protein resides in the nucleus. Its function is as follows. Gap class segmentation protein that controls development of head structures. The protein is Protein hunchback (hb) of Euscelis plebejus (Leafhopper).